A 2189-amino-acid chain; its full sequence is Chromatin modification-related protein eaf-1 (2189 aa).

Disordered regions lie at residues 183-400 (VQGS…SGAE), 415-438 (VIGK…TQHP), and 477-601 (EVAK…PPGL). A compositionally biased stretch (low complexity) spans 234 to 253 (PTPQTVAPPATAPTSTTKTA). The span at 260–277 (AGPKDDTVSRGDAEEKAR) shows a compositional bias: basic and acidic residues. Composition is skewed to polar residues over residues 281–293 (TITS…SNGD), 300–312 (TLSS…QSAP), and 319–333 (ASAS…SQSF). Basic and acidic residues predominate over residues 336–349 (PVSRPEQELRRATT). Residues 534 to 543 (QPQPSSTAPS) show a composition bias toward low complexity. Residues 573-583 (ETQARTSQSSH) show a composition bias toward polar residues. One can recognise an HSA domain in the interval 722 to 797 (PVRCLEPARP…PPVRAVDNAD (76 aa)). The Myb-like domain occupies 985–1045 (FESRIASQWT…ECFERWVNLE (61 aa)). 2 stretches are compositionally biased toward low complexity: residues 1320–1330 (VAVQLQQQQHQ) and 1336–1406 (QHPQ…QVTQ). Disordered stretches follow at residues 1320–1428 (VAVQ…PMRP), 1622–1644 (MQTQ…QAQA), 1663–1831 (QKQA…GQVQ), and 1846–2189 (VQGQ…APTK). Composition is skewed to low complexity over residues 1663 to 1808 (QKQA…QGQG), 1818 to 1831 (GQGH…GQVQ), 1846 to 1863 (VQGQ…PQHA), 1873 to 2089 (QHAQ…QPQQ), and 2097 to 2189 (SQPQ…APTK).

This sequence belongs to the EAF1 family. In terms of assembly, component of the NuA4 histone acetyltransferase complex.

Its subcellular location is the nucleus. Functionally, component of the NuA4 histone acetyltransferase complex which is involved in transcriptional activation of selected genes principally by acetylation of nucleosomal histone H4 and H2A. The NuA4 complex is also involved in DNA repair. The protein is Chromatin modification-related protein eaf-1 (eaf-1) of Neurospora crassa (strain ATCC 24698 / 74-OR23-1A / CBS 708.71 / DSM 1257 / FGSC 987).